The sequence spans 69 residues: Toxin Tz2 (69 aa).

The first 7 residues, 1-7 (IEVVMGG), serve as a signal peptide directing secretion. The region spanning 8–69 (KEGYLLDKSN…KMWDLKTNKC (62 aa)) is the LCN-type CS-alpha/beta domain. 4 disulfides stabilise this stretch: Cys-19–Cys-69, Cys-23–Cys-45, Cys-31–Cys-50, and Cys-35–Cys-52.

Belongs to the long (4 C-C) scorpion toxin superfamily. Sodium channel inhibitor family. Beta subfamily. As to expression, expressed by the venom gland.

It is found in the secreted. Its function is as follows. Beta toxins bind voltage-independently at site-4 of sodium channels (Nav) and shift the voltage of activation toward more negative potentials thereby affecting sodium channel activation and promoting spontaneous and repetitive firing. This Tityus zulianus (Venezuelan scorpion) protein is Toxin Tz2.